A 101-amino-acid chain; its full sequence is Anti-sigma factor RshA (101 aa).

Positions 1-20 are disordered; sequence MSETEREDERWTPPIGPIDP. Residues Cys-25, His-51, Cys-55, and Cys-58 each coordinate iron-sulfur cluster. Thr-96 is subject to Phosphothreonine.

This sequence belongs to the zinc-associated anti-sigma factor (ZAS) superfamily. In terms of assembly, interacts with cognate ECF RNA polymerase sigma factor SigH under reducing conditions; the complex is disrupted under oxiding conditions or as temperatures rise. Binding inhibits the interaction of SigH with the RNA polymerase catalytic core. It depends on iron-sulfur cluster as a cofactor. In terms of processing, phosphorylated, probably by PknB. Phosphorylation decreases interaction with SigH, probably leading to increased SigH-mediated transcription.

Functionally, a redox-regulated anti-sigma factor for cognate extracytoplasmic function (ECF) sigma factor SigH. ECF sigma factors are held in an inactive form by an anti-sigma factor. Overexpression leads to increased susceptibility to diamide. The sequence is that of Anti-sigma factor RshA (rshA) from Mycolicibacterium smegmatis (strain ATCC 700084 / mc(2)155) (Mycobacterium smegmatis).